Here is a 309-residue protein sequence, read N- to C-terminus: Olfactory receptor 7A10 (309 aa).

Residues 1–25 are Extracellular-facing; that stretch reads MKSWNNTIILEFLLLGISEEPELQA. A glycan (N-linked (GlcNAc...) asparagine) is linked at Asn5. Residues 26-46 form a helical membrane-spanning segment; the sequence is FLFGLFLSMYLVTVLGNLLII. Topologically, residues 47-54 are cytoplasmic; it reads LATISDSH. The chain crosses the membrane as a helical span at residues 55–75; sequence LHTPMYFFLSNLSFVDICFVS. Topologically, residues 76 to 99 are extracellular; the sequence is TTVPKMLVNIQTHNKVITYAGCIT. Cys97 and Cys189 are disulfide-bonded. Residues 100–120 form a helical membrane-spanning segment; the sequence is QMCFFLLFVGLDNFLLTVMAY. At 121–139 the chain is on the cytoplasmic side; that stretch reads DRFVAICHPLHYMVIMNPQ. Residues 140–160 traverse the membrane as a helical segment; it reads LCGLLVLASWIMSVLNSMLQS. The Extracellular segment spans residues 161 to 197; it reads LMVLPLPFCTHMEIPHFFCEINQVVHLACSDTFLNDI. A helical transmembrane segment spans residues 198 to 217; sequence VMYFAVALLGGGPLTGILYS. Residues 218 to 237 are Cytoplasmic-facing; the sequence is YSKIVSSIRAISSAQGKYKA. Residues 238–258 form a helical membrane-spanning segment; sequence FSTCASHLSVVSLFYGTCLGV. Residues 259–271 lie on the Extracellular side of the membrane; sequence YLSSAATHNSHTG. The chain crosses the membrane as a helical span at residues 272–292; it reads AAASVMYTVVTPMLNPFIYSL. Residues 293–309 are Cytoplasmic-facing; it reads RNKHIKGAMKTFFRGKQ.

Belongs to the G-protein coupled receptor 1 family.

It is found in the cell membrane. In terms of biological role, odorant receptor. In Homo sapiens (Human), this protein is Olfactory receptor 7A10 (OR7A10).